The chain runs to 194 residues: Serine/threonine-protein kinase mos (194 aa).

The Protein kinase domain maps to 47 to 194 (LCLLNLLGSG…HLDLKPANIF (148 aa)). ATP contacts are provided by residues 53-61 (LGSGGFGSV) and lysine 74. Aspartate 187 (proton acceptor) is an active-site residue.

Belongs to the protein kinase superfamily. Ser/Thr protein kinase family.

The enzyme catalyses L-seryl-[protein] + ATP = O-phospho-L-seryl-[protein] + ADP + H(+). The catalysed reaction is L-threonyl-[protein] + ATP = O-phospho-L-threonyl-[protein] + ADP + H(+). The sequence is that of Serine/threonine-protein kinase mos (MOS) from Dendroaspis angusticeps (Eastern green mamba).